A 172-amino-acid chain; its full sequence is Bacilliredoxin SRU_0242 (172 aa).

The interval 141–172 (TDEAPPSDAPSRPDLSSSPNAGGLPSTFQSIS) is disordered. The segment covering 154 to 172 (DLSSSPNAGGLPSTFQSIS) has biased composition (polar residues).

Belongs to the bacilliredoxin family.

The chain is Bacilliredoxin SRU_0242 from Salinibacter ruber (strain DSM 13855 / M31).